The chain runs to 365 residues: 3,4-dihydroxy-2-butanone 4-phosphate synthase (365 aa).

The DHBP synthase stretch occupies residues 1–201; sequence MALNTIDELI…IADLIHYRLI (201 aa). D-ribulose 5-phosphate-binding positions include 27–28, aspartate 32, 140–144, and glutamate 164; these read RE and RAGHT. A Mg(2+)-binding site is contributed by glutamate 28. Residue histidine 143 participates in Mg(2+) binding. Residues 202-365 form a GTP cyclohydrolase II-like region; it reads HERTVERIAE…LEVVEYLPAE (164 aa).

In the N-terminal section; belongs to the DHBP synthase family. It in the C-terminal section; belongs to the GTP cyclohydrolase II family. Mg(2+) is required as a cofactor. Mn(2+) serves as cofactor.

The catalysed reaction is D-ribulose 5-phosphate = (2S)-2-hydroxy-3-oxobutyl phosphate + formate + H(+). Its pathway is cofactor biosynthesis; riboflavin biosynthesis; 2-hydroxy-3-oxobutyl phosphate from D-ribulose 5-phosphate: step 1/1. In terms of biological role, catalyzes the conversion of D-ribulose 5-phosphate to formate and 3,4-dihydroxy-2-butanone 4-phosphate. The chain is 3,4-dihydroxy-2-butanone 4-phosphate synthase (ribB) from Pseudomonas aeruginosa (strain ATCC 15692 / DSM 22644 / CIP 104116 / JCM 14847 / LMG 12228 / 1C / PRS 101 / PAO1).